The primary structure comprises 56 residues: Frontoxin I (56 aa).

Disulfide bonds link C3/C22, C17/C39, C41/C52, and C53/C56.

It belongs to the three-finger toxin family. Short-chain subfamily. Type I alpha-neurotoxin sub-subfamily. As to expression, expressed by the venom gland.

The protein resides in the secreted. Binds to muscle nicotinic acetylcholine receptor (nAChR) and inhibit acetylcholine from binding to the receptor, thereby impairing neuromuscular transmission. This Micrurus frontalis (Coral snake) protein is Frontoxin I.